The chain runs to 57 residues: Potassium channel toxin MeuTXKalpha2 (57 aa).

The N-terminal stretch at 1–19 (MSRLYAIILIALVFNVIMT) is a signal peptide. Positions 20-28 (IMPDMKVEA) are excised as a propeptide. Intrachain disulfides connect Cys31–Cys47, Cys34–Cys52, and Cys38–Cys54.

The protein belongs to the short scorpion toxin superfamily. Potassium channel inhibitor family. Alpha-KTx 08 subfamily. Expressed by the venom gland.

The protein localises to the secreted. Functionally, inhibits Kv1.1/KCNA1, Kv1.3/KCNA3 and Shaker potassium channels. This chain is Potassium channel toxin MeuTXKalpha2, found in Mesobuthus eupeus (Lesser Asian scorpion).